The chain runs to 268 residues: Single-stranded DNA-binding protein WHY3, chloroplastic (268 aa).

A chloroplast-targeting transit peptide spans 1–75 (MSQLLSSPPM…KQRFGDSSSS (75 aa)). A required for ssDNA binding region spans residues 93–98 (KGKAAL). A Nuclear localization signal motif is present at residues 171-185 (KGKGSDEGKVRKVLK).

The protein belongs to the Whirly family. In terms of assembly, homotetramer.

The protein localises to the plastid. The protein resides in the chloroplast. It is found in the nucleus. In terms of biological role, single-stranded DNA-binding protein that functions in both chloroplasts and nucleus. In chloroplasts, maintains plastid genome stability by preventing break-induced and short homology-dependent illegitimate recombinations. In the nucleus, is recruited to a distal element upstream of the kinesin KP1 to mediate the transcriptional repression of KP1. Can bind double-stranded DNA in vivo. The chain is Single-stranded DNA-binding protein WHY3, chloroplastic (WHY3) from Arabidopsis thaliana (Mouse-ear cress).